We begin with the raw amino-acid sequence, 227 residues long: Enolase-phosphatase E1 (227 aa).

This sequence belongs to the HAD-like hydrolase superfamily. MasA/MtnC family. In terms of assembly, monomer. It depends on Mg(2+) as a cofactor.

The enzyme catalyses 5-methylsulfanyl-2,3-dioxopentyl phosphate + H2O = 1,2-dihydroxy-5-(methylsulfanyl)pent-1-en-3-one + phosphate. The protein operates within amino-acid biosynthesis; L-methionine biosynthesis via salvage pathway; L-methionine from S-methyl-5-thio-alpha-D-ribose 1-phosphate: step 3/6. Its pathway is amino-acid biosynthesis; L-methionine biosynthesis via salvage pathway; L-methionine from S-methyl-5-thio-alpha-D-ribose 1-phosphate: step 4/6. Its function is as follows. Bifunctional enzyme that catalyzes the enolization of 2,3-diketo-5-methylthiopentyl-1-phosphate (DK-MTP-1-P) into the intermediate 2-hydroxy-3-keto-5-methylthiopentenyl-1-phosphate (HK-MTPenyl-1-P), which is then dephosphorylated to form the acireductone 1,2-dihydroxy-3-keto-5-methylthiopentene (DHK-MTPene). The chain is Enolase-phosphatase E1 from Gluconobacter oxydans (strain 621H) (Gluconobacter suboxydans).